Consider the following 357-residue polypeptide: BLOC-1-related complex subunit 6 (357 aa).

A disordered region spans residues 20-196 (HQALVFGGGP…SGAGGGRRAT (177 aa)). The span at 90-99 (GAGSRRGAPG) shows a compositional bias: low complexity. A compositionally biased stretch (acidic residues) spans 138–149 (EQQEEEDNDEEA). The segment covering 150 to 162 (AAGSRAGRSFSSR) has biased composition (low complexity). Serine 168 carries the post-translational modification Phosphoserine. A Phosphothreonine modification is found at threonine 196. Position 199 is a phosphoserine (serine 199). The tract at residues 227-256 (LSGAPPPPPSAPARPCPAPAPTPTPAIPPI) is disordered. Pro residues predominate over residues 230-256 (APPPPPSAPARPCPAPAPTPTPAIPPI).

This sequence belongs to the BORCS6 family. Component of the BLOC-one-related complex (BORC) which is composed of BLOC1S1, BLOC1S2, BORCS5, BORCS6, BORCS7, BORCS8, KXD1 and SNAPIN.

It localises to the lysosome membrane. In terms of biological role, as part of the BORC complex may play a role in lysosomes movement and localization at the cell periphery. Associated with the cytosolic face of lysosomes, the BORC complex may recruit ARL8B and couple lysosomes to microtubule plus-end-directed kinesin motor. The protein is BLOC-1-related complex subunit 6 of Homo sapiens (Human).